Here is a 384-residue protein sequence, read N- to C-terminus: Tryptophan--tRNA ligase (384 aa).

Positions 81–89 (PSGPMHIGH) match the 'HIGH' region motif. Positions 252 to 256 (KMSAS) match the 'KMSKS' region motif.

The protein belongs to the class-I aminoacyl-tRNA synthetase family.

The protein resides in the cytoplasm. It carries out the reaction tRNA(Trp) + L-tryptophan + ATP = L-tryptophyl-tRNA(Trp) + AMP + diphosphate + H(+). This Thermococcus sibiricus (strain DSM 12597 / MM 739) protein is Tryptophan--tRNA ligase.